The sequence spans 391 residues: Ferrochelatase (391 aa).

Fe cation contacts are provided by His-196 and Glu-281.

This sequence belongs to the ferrochelatase family.

The protein localises to the cytoplasm. It catalyses the reaction heme b + 2 H(+) = protoporphyrin IX + Fe(2+). Its pathway is porphyrin-containing compound metabolism; protoheme biosynthesis; protoheme from protoporphyrin-IX: step 1/1. Functionally, catalyzes the ferrous insertion into protoporphyrin IX. This is Ferrochelatase from Prochlorococcus marinus (strain AS9601).